A 93-amino-acid polypeptide reads, in one-letter code: Large ribosomal subunit protein uL23 (93 aa).

The protein belongs to the universal ribosomal protein uL23 family. In terms of assembly, part of the 50S ribosomal subunit. Contacts protein L29, and trigger factor when it is bound to the ribosome.

Its function is as follows. One of the early assembly proteins it binds 23S rRNA. One of the proteins that surrounds the polypeptide exit tunnel on the outside of the ribosome. Forms the main docking site for trigger factor binding to the ribosome. This is Large ribosomal subunit protein uL23 from Campylobacter jejuni subsp. doylei (strain ATCC BAA-1458 / RM4099 / 269.97).